The sequence spans 172 residues: 3-hydroxydecanoyl-[acyl-carrier-protein] dehydratase (172 aa).

His-71 is an active-site residue.

It belongs to the thioester dehydratase family. FabA subfamily. Homodimer.

It is found in the cytoplasm. The enzyme catalyses a (3R)-hydroxyacyl-[ACP] = a (2E)-enoyl-[ACP] + H2O. It carries out the reaction (3R)-hydroxydecanoyl-[ACP] = (2E)-decenoyl-[ACP] + H2O. It catalyses the reaction (2E)-decenoyl-[ACP] = (3Z)-decenoyl-[ACP]. It functions in the pathway lipid metabolism; fatty acid biosynthesis. Its function is as follows. Necessary for the introduction of cis unsaturation into fatty acids. Catalyzes the dehydration of (3R)-3-hydroxydecanoyl-ACP to E-(2)-decenoyl-ACP and then its isomerization to Z-(3)-decenoyl-ACP. Can catalyze the dehydratase reaction for beta-hydroxyacyl-ACPs with saturated chain lengths up to 16:0, being most active on intermediate chain length. The chain is 3-hydroxydecanoyl-[acyl-carrier-protein] dehydratase from Escherichia coli (strain 55989 / EAEC).